A 134-amino-acid polypeptide reads, in one-letter code: U34-theraphotoxin-Cg1a (134 aa).

An N-terminal signal peptide occupies residues 1 to 19; the sequence is MKLAVVFLLTTVVFTLAQS. Intrachain disulfides connect Cys-24–Cys-35, Cys-29–Cys-53, and Cys-63–Cys-84. The segment at 97–134 is disordered; that stretch reads EQSSTSTSSTQGPITSSTVTTQSEATTETETTTAAEGK. A compositionally biased stretch (low complexity) spans 99–134; that stretch reads SSTSTSSTQGPITSSTVTTQSEATTETETTTAAEGK.

The protein belongs to the neurotoxin 32 family. In terms of tissue distribution, expressed by the venom gland.

Its subcellular location is the secreted. In Chilobrachys guangxiensis (Chinese earth tiger tarantula), this protein is U34-theraphotoxin-Cg1a.